A 193-amino-acid polypeptide reads, in one-letter code: Adenine phosphoribosyltransferase (193 aa).

Belongs to the purine/pyrimidine phosphoribosyltransferase family. Homodimer.

The protein localises to the cytoplasm. It carries out the reaction AMP + diphosphate = 5-phospho-alpha-D-ribose 1-diphosphate + adenine. It functions in the pathway purine metabolism; AMP biosynthesis via salvage pathway; AMP from adenine: step 1/1. Functionally, catalyzes a salvage reaction resulting in the formation of AMP, that is energically less costly than de novo synthesis. The polypeptide is Adenine phosphoribosyltransferase (Bifidobacterium animalis subsp. lactis (strain AD011)).